A 336-amino-acid polypeptide reads, in one-letter code: Tyrosine recombinase XerC (336 aa).

The 93-residue stretch at 14-106 folds into the Core-binding (CB) domain; it reads VANCRWLGEF…SVKSFYRFLL (93 aa). Residues 127-330 form the Tyr recombinase domain; it reads KIPDFLSEEE…TFNRLRDAYT (204 aa). Active-site residues include Arg183, Lys207, His282, Arg285, and His308. The active-site O-(3'-phospho-DNA)-tyrosine intermediate is the Tyr317.

Belongs to the 'phage' integrase family. XerC subfamily. In terms of assembly, forms a cyclic heterotetrameric complex composed of two molecules of XerC and two molecules of XerD.

It localises to the cytoplasm. Its function is as follows. Site-specific tyrosine recombinase, which acts by catalyzing the cutting and rejoining of the recombining DNA molecules. The XerC-XerD complex is essential to convert dimers of the bacterial chromosome into monomers to permit their segregation at cell division. It also contributes to the segregational stability of plasmids. The protein is Tyrosine recombinase XerC of Chlorobaculum tepidum (strain ATCC 49652 / DSM 12025 / NBRC 103806 / TLS) (Chlorobium tepidum).